An 85-amino-acid polypeptide reads, in one-letter code: Small ribosomal subunit protein uS15c (85 aa).

This sequence belongs to the universal ribosomal protein uS15 family. In terms of assembly, part of the 30S ribosomal subunit.

Its subcellular location is the plastid. The protein resides in the chloroplast. In Chaetosphaeridium globosum (Charophycean green alga), this protein is Small ribosomal subunit protein uS15c (rps15).